A 232-amino-acid chain; its full sequence is Ribonuclease P protein component 3 (232 aa).

Belongs to the eukaryotic/archaeal RNase P protein component 3 family. As to quaternary structure, consists of a catalytic RNA component and at least 4-5 protein subunits. Forms a subcomplex with Rnp2 which stimulates the catalytic RNA.

It is found in the cytoplasm. It carries out the reaction Endonucleolytic cleavage of RNA, removing 5'-extranucleotides from tRNA precursor.. Its function is as follows. Part of ribonuclease P, a protein complex that generates mature tRNA molecules by cleaving their 5'-ends. The protein is Ribonuclease P protein component 3 of Methanocaldococcus jannaschii (strain ATCC 43067 / DSM 2661 / JAL-1 / JCM 10045 / NBRC 100440) (Methanococcus jannaschii).